Consider the following 498-residue polypeptide: Histone-lysine N-methyltransferase SET5 (498 aa).

Residues Lys-68–Ser-94 form a disordered region. In terms of domain architecture, SET spans Ala-108–Ile-415.

The protein belongs to the class V-like SAM-binding methyltransferase superfamily. Histone-lysine methyltransferase family. SET5 subfamily.

The protein resides in the nucleus. Its subcellular location is the chromosome. It localises to the cytoplasm. The enzyme catalyses L-lysyl-[histone] + S-adenosyl-L-methionine = N(6)-methyl-L-lysyl-[histone] + S-adenosyl-L-homocysteine + H(+). Its function is as follows. Histone methyltransferase that monomethylates 'Lys-5', 'Lys-8' and 'Lys-12' of histone H4 (H4K5me1, H4K8me1 and H4K12me1, respectively), thereby controlling gene expression and remodeling chromatin structures. This chain is Histone-lysine N-methyltransferase SET5 (SET5), found in Mycosarcoma maydis (Corn smut fungus).